Reading from the N-terminus, the 557-residue chain is Potassium-transporting ATPase potassium-binding subunit (557 aa).

The next 12 helical transmembrane spans lie at 5-25 (GFLL…PLGS), 63-83 (LCAI…MLLG), 132-152 (GLTV…FALI), 170-190 (LLRI…LFFI), 253-273 (FVQM…FGEV), 283-303 (LLWA…WAEV), 329-349 (VLVS…AVIA), 356-376 (ALGG…FGGV), 379-399 (GLYG…LMIG), 416-436 (LTAL…ALAM), 484-504 (LLAF…MAIA), and 526-546 (LFVG…FIPA).

This sequence belongs to the KdpA family. As to quaternary structure, the system is composed of three essential subunits: KdpA, KdpB and KdpC.

It localises to the cell inner membrane. Functionally, part of the high-affinity ATP-driven potassium transport (or Kdp) system, which catalyzes the hydrolysis of ATP coupled with the electrogenic transport of potassium into the cytoplasm. This subunit binds the periplasmic potassium ions and delivers the ions to the membrane domain of KdpB through an intramembrane tunnel. In Escherichia coli (strain SE11), this protein is Potassium-transporting ATPase potassium-binding subunit.